The sequence spans 60 residues: Large ribosomal subunit protein uL30 (60 aa).

It belongs to the universal ribosomal protein uL30 family. In terms of assembly, part of the 50S ribosomal subunit.

The chain is Large ribosomal subunit protein uL30 from Aromatoleum aromaticum (strain DSM 19018 / LMG 30748 / EbN1) (Azoarcus sp. (strain EbN1)).